Here is a 172-residue protein sequence, read N- to C-terminus: Ribosome maturation factor RimM (172 aa).

A PRC barrel domain is found at D96–L168.

Belongs to the RimM family. Binds ribosomal protein uS19.

Its subcellular location is the cytoplasm. Functionally, an accessory protein needed during the final step in the assembly of 30S ribosomal subunit, possibly for assembly of the head region. Essential for efficient processing of 16S rRNA. May be needed both before and after RbfA during the maturation of 16S rRNA. It has affinity for free ribosomal 30S subunits but not for 70S ribosomes. In Streptococcus thermophilus (strain ATCC BAA-491 / LMD-9), this protein is Ribosome maturation factor RimM.